Here is an 80-residue protein sequence, read N- to C-terminus: Cytochrome c oxidase subunit 7B, mitochondrial (80 aa).

The transit peptide at 1–24 (MFPLVKSALNRLQVRSIQQTMARQ) directs the protein to the mitochondrion. Over 25–32 (SHQKRTPD) the chain is Mitochondrial matrix. A helical transmembrane segment spans residues 33–59 (FHDKYGNAVLASGATFCIVTWTYVATQ). Residues 60-80 (VGIEWNLSPVGRVTPKEWRNQ) lie on the Mitochondrial intermembrane side of the membrane.

This sequence belongs to the cytochrome c oxidase VIIb family. Component of the cytochrome c oxidase (complex IV, CIV), a multisubunit enzyme composed of 14 subunits. The complex is composed of a catalytic core of 3 subunits MT-CO1, MT-CO2 and MT-CO3, encoded in the mitochondrial DNA, and 11 supernumerary subunits COX4I1 (or COX4I2), COX5A, COX5B, COX6A1 (or COX6A2), COX6B1 (or COX6B2), COX6C, COX7A2 (or COX7A1), COX7B, COX7C, COX8A and NDUFA4, which are encoded in the nuclear genome. The complex exists as a monomer or a dimer and forms supercomplexes (SCs) in the inner mitochondrial membrane with NADH-ubiquinone oxidoreductase (complex I, CI) and ubiquinol-cytochrome c oxidoreductase (cytochrome b-c1 complex, complex III, CIII), resulting in different assemblies (supercomplex SCI(1)III(2)IV(1) and megacomplex MCI(2)III(2)IV(2)).

Its subcellular location is the mitochondrion inner membrane. The protein operates within energy metabolism; oxidative phosphorylation. Its function is as follows. Component of the cytochrome c oxidase, the last enzyme in the mitochondrial electron transport chain which drives oxidative phosphorylation. The respiratory chain contains 3 multisubunit complexes succinate dehydrogenase (complex II, CII), ubiquinol-cytochrome c oxidoreductase (cytochrome b-c1 complex, complex III, CIII) and cytochrome c oxidase (complex IV, CIV), that cooperate to transfer electrons derived from NADH and succinate to molecular oxygen, creating an electrochemical gradient over the inner membrane that drives transmembrane transport and the ATP synthase. Cytochrome c oxidase is the component of the respiratory chain that catalyzes the reduction of oxygen to water. Electrons originating from reduced cytochrome c in the intermembrane space (IMS) are transferred via the dinuclear copper A center (CU(A)) of subunit 2 and heme A of subunit 1 to the active site in subunit 1, a binuclear center (BNC) formed by heme A3 and copper B (CU(B)). The BNC reduces molecular oxygen to 2 water molecules using 4 electrons from cytochrome c in the IMS and 4 protons from the mitochondrial matrix. Plays a role in proper central nervous system (CNS) development in vertebrates. This chain is Cytochrome c oxidase subunit 7B, mitochondrial (COX7B), found in Homo sapiens (Human).